Reading from the N-terminus, the 349-residue chain is Putative transport protein jhp_0514 (349 aa).

Helical transmembrane passes span 6 to 26 (FFWILFLIGFYWMLYLYQDFL), 27 to 47 (MDALIAGLLCVGLFQVKVFLN), 56 to 76 (SFLCVLVLASVVIVPLYFIVY), 143 to 163 (LKLVTDALFILGLLFFFFYYG), 195 to 215 (VLLTSLITVILEGVAFGTMII), 224 to 244 (LGILYGLASLVPAVGGALIWI), 258 to 278 (EAIFIVLYSILLIGVLIDSVI), and 300 to 320 (ILIFFSMIAGISQFGFWGIIV).

The protein belongs to the autoinducer-2 exporter (AI-2E) (TC 2.A.86) family.

The protein resides in the cell membrane. This is Putative transport protein jhp_0514 from Helicobacter pylori (strain J99 / ATCC 700824) (Campylobacter pylori J99).